A 145-amino-acid chain; its full sequence is D-aminoacyl-tRNA deacylase (145 aa).

The Gly-cisPro motif, important for rejection of L-amino acids signature appears at 137–138 (GP).

It belongs to the DTD family. As to quaternary structure, homodimer.

The protein resides in the cytoplasm. It catalyses the reaction glycyl-tRNA(Ala) + H2O = tRNA(Ala) + glycine + H(+). It carries out the reaction a D-aminoacyl-tRNA + H2O = a tRNA + a D-alpha-amino acid + H(+). Its function is as follows. An aminoacyl-tRNA editing enzyme that deacylates mischarged D-aminoacyl-tRNAs. Also deacylates mischarged glycyl-tRNA(Ala), protecting cells against glycine mischarging by AlaRS. Acts via tRNA-based rather than protein-based catalysis; rejects L-amino acids rather than detecting D-amino acids in the active site. By recycling D-aminoacyl-tRNA to D-amino acids and free tRNA molecules, this enzyme counteracts the toxicity associated with the formation of D-aminoacyl-tRNA entities in vivo and helps enforce protein L-homochirality. The sequence is that of D-aminoacyl-tRNA deacylase from Shewanella putrefaciens (strain CN-32 / ATCC BAA-453).